Here is a 512-residue protein sequence, read N- to C-terminus: UDP-N-acetylglucosamine--peptide N-acetylglucosaminyltransferase GtfA subunit (512 aa).

16 to 19 (GVEY) is a UDP binding site. His-251 is an N-acetyl-D-glucosamine binding site. Residues 393–394 (QH) and 413–416 (EGFG) contribute to the UDP site.

Belongs to the glycosyltransferase group 1 family. Glycosyltransferase 4 subfamily. Forms a heterotetramer with 2 subunits each of GtfA and GtfB. Part of the accessory SecA2/SecY2 protein translocation apparatus.

Its subcellular location is the cytoplasm. The protein resides in the cell membrane. The catalysed reaction is L-seryl-[protein] + UDP-N-acetyl-alpha-D-glucosamine = 3-O-[N-acetyl-alpha-D-glucosaminyl]-L-seryl-[protein] + UDP + H(+). It participates in protein modification; protein glycosylation. Its function is as follows. Required for polymorphic O-glycosylation of the serine-rich repeat protein (SRRP) in this bacteria. Catalyzes the first step in glycosylation by transferring N-acetylglucosamine from UDP-GlcNAc to serine residues in the substrate protein. Part of the accessory SecA2/SecY2 system specifically required to export serine-rich repeat cell wall proteins encoded in the same operon. The GtfA-GtfB complex adds GlcNAc from UDP-GlcNAc to SRRP (experimentally characterized with a truncated SSR1 construct); the alpha linkage was shown for this enzyme but not the residues glycosylated on SRRP. The polypeptide is UDP-N-acetylglucosamine--peptide N-acetylglucosaminyltransferase GtfA subunit (Limosilactobacillus reuteri subsp. suis (strain ATCC 53608 / LMG 31752 / 1063) (Lactobacillus reuteri)).